The following is a 636-amino-acid chain: uncharacterized protein (636 aa).

Residues 10–36 (CLACRRKKVKCNRQYPCTRCLKYGEAC) constitute a DNA-binding region (zn(2)-C6 fungal-type). Residues 556-580 (NSQSTSEFVSPISDTENGSSSQQVS) are compositionally biased toward polar residues. The tract at residues 556 to 581 (NSQSTSEFVSPISDTENGSSSQQVSE) is disordered.

The protein localises to the cytoplasm. It localises to the nucleus. This is an uncharacterized protein from Schizosaccharomyces pombe (strain 972 / ATCC 24843) (Fission yeast).